The following is a 212-amino-acid chain: Orotate phosphoribosyltransferase (212 aa).

5-phospho-alpha-D-ribose 1-diphosphate is bound at residue K26. 34 to 35 provides a ligand contact to orotate; it reads FF. 5-phospho-alpha-D-ribose 1-diphosphate-binding positions include 72-73, R98, K99, K102, H104, and 123-131; these read YK and DDVITAGTA. T127 and R155 together coordinate orotate.

It belongs to the purine/pyrimidine phosphoribosyltransferase family. PyrE subfamily. Homodimer. Mg(2+) serves as cofactor.

It catalyses the reaction orotidine 5'-phosphate + diphosphate = orotate + 5-phospho-alpha-D-ribose 1-diphosphate. The protein operates within pyrimidine metabolism; UMP biosynthesis via de novo pathway; UMP from orotate: step 1/2. In terms of biological role, catalyzes the transfer of a ribosyl phosphate group from 5-phosphoribose 1-diphosphate to orotate, leading to the formation of orotidine monophosphate (OMP). This Marinobacter nauticus (strain ATCC 700491 / DSM 11845 / VT8) (Marinobacter aquaeolei) protein is Orotate phosphoribosyltransferase.